The sequence spans 230 residues: MKKTTVLQVCMVFVVCSLQAVIGSPVDCPDQDTAGVSCIISLEKLLERAVQHAELIHHIAEESKLLFDEMLISFGVVNLHISEGTMCSPKTVSVPMSKTEIQQISDKWLLHSVLILVQFWINPLVDVQASLMNYQNAPSALVDRSKLMSTKITSLEQGILVLIRQILGEGGLVVEGPEDTSDHFVSSDTFETVRRDYSVIYCFRKDAHKIQTLLKLLKCRQIDKENCSLF.

A signal peptide spans 1-23 (MKKTTVLQVCMVFVVCSLQAVIG). Cystine bridges form between cysteine 28–cysteine 38, cysteine 87–cysteine 202, and cysteine 219–cysteine 227. Asparagine 226 is a glycosylation site (N-linked (GlcNAc...) asparagine).

This sequence belongs to the somatotropin/prolactin family.

It is found in the secreted. The chain is Somatolactin from Carassius auratus (Goldfish).